A 135-amino-acid polypeptide reads, in one-letter code: Large ribosomal subunit protein eL32 (135 aa).

Belongs to the eukaryotic ribosomal protein eL32 family.

In Methanococcus maripaludis (strain C7 / ATCC BAA-1331), this protein is Large ribosomal subunit protein eL32.